A 132-amino-acid polypeptide reads, in one-letter code: Interferon-induced transmembrane protein 5 (132 aa).

The segment covering methionine 1 to arginine 11 has biased composition (basic and acidic residues). Residues methionine 1–histidine 21 form a disordered region. At methionine 1–histidine 36 the chain is on the extracellular side. Residues leucine 37–leucine 57 traverse the membrane as a helical segment. Residues cysteine 50, cysteine 51, and cysteine 84 are each lipidated (S-palmitoyl cysteine). Residues alanine 58–asparagine 86 lie on the Cytoplasmic side of the membrane. The chain crosses the membrane as a helical span at residues isoleucine 87 to glycine 107. At alanine 108–aspartate 132 the chain is on the extracellular side.

It belongs to the CD225/Dispanin family. As to quaternary structure, interacts with FKBP11. Post-translationally, palmitoylated. As to expression, detected in osteoblasts and fibroblasts (at protein level). Detected in bone.

The protein localises to the cell membrane. Functionally, required for normal bone mineralization. This is Interferon-induced transmembrane protein 5 (IFITM5) from Homo sapiens (Human).